Reading from the N-terminus, the 826-residue chain is Periplasmic nitrate reductase (826 aa).

A signal peptide (tat-type signal) is located at residues 1–32 (MELNRRDFMKANAAIAAAAAAGITIPVKNVQA). In terms of domain architecture, 4Fe-4S Mo/W bis-MGD-type spans 37 to 93 (IRWDKAPCRYCGTGCSVLVGTKDGRVVATQGDPDAEVNRGLNCIKGYFLSKIMYGAD). [4Fe-4S] cluster is bound by residues Cys44, Cys47, Cys51, and Cys79. Mo-bis(molybdopterin guanine dinucleotide)-binding positions include Lys81, Gln148, Asn173, Cys177, 210-217 (WGSNMAEM), 241-245 (STYEH), 260-262 (QSD), Met370, Gln374, Asn480, 506-507 (SD), Lys529, Asp556, and 716-725 (TGRVLEHWHT). Phe792 is a substrate binding site. Residues Asn800 and Lys817 each coordinate Mo-bis(molybdopterin guanine dinucleotide).

This sequence belongs to the prokaryotic molybdopterin-containing oxidoreductase family. NasA/NapA/NarB subfamily. As to quaternary structure, component of the periplasmic nitrate reductase NapAB complex composed of NapA and NapB. [4Fe-4S] cluster serves as cofactor. It depends on Mo-bis(molybdopterin guanine dinucleotide) as a cofactor. Post-translationally, predicted to be exported by the Tat system. The position of the signal peptide cleavage has not been experimentally proven.

Its subcellular location is the periplasm. It carries out the reaction 2 Fe(II)-[cytochrome] + nitrate + 2 H(+) = 2 Fe(III)-[cytochrome] + nitrite + H2O. Its function is as follows. Catalytic subunit of the periplasmic nitrate reductase complex NapAB. Receives electrons from NapB and catalyzes the reduction of nitrate to nitrite. The protein is Periplasmic nitrate reductase of Actinobacillus succinogenes (strain ATCC 55618 / DSM 22257 / CCUG 43843 / 130Z).